Reading from the N-terminus, the 435-residue chain is Nuclear receptor subfamily 6 group A member 1 (435 aa).

The segment at residues 11–86 is a DNA-binding region (nuclear receptor); that stretch reads QRACLICGDR…MGMNRKAIRE (76 aa). 2 NR C4-type zinc fingers span residues 14-34 and 50-69; these read CLIC…CEGC and CSRD…CQYC. A disordered region spans residues 84-157; the sequence is IREDGMPGGR…VSTPSSSRSM (74 aa). The span at 121–141 shows a compositional bias: polar residues; sequence NTSWSNNGDSDHSSPGNGVSE. Residues 142–156 show a composition bias toward low complexity; it reads SNQPSPVSTPSSSRS. One can recognise an NR LBD domain in the interval 204 to 435; the sequence is QSHTLINQLL…HSCKTSLTKE (232 aa).

It belongs to the nuclear hormone receptor family. NR6 subfamily. Homodimer.

The protein resides in the cytoplasm. The protein localises to the nucleus. Functionally, probable orphan nuclear receptor. Binds to a response element containing repeats of the motif 5'-AGGTCA-3'. Required for anterior-posterior patterning during organogenesis. Acts with chordin to play a role in patterning the midbrain-hindbrain. Isoform Em is required for integrin-mediated cell matrix interaction during neurulation and for the morphogenetic movements leading to formation of the neural tube. Also mediates the effect of retinoic acid on primary neurogenesis. The chain is Nuclear receptor subfamily 6 group A member 1 from Xenopus tropicalis (Western clawed frog).